The following is a 997-amino-acid chain: Autophagy-related protein 9 (997 aa).

Over 1–318 the chain is Cytoplasmic; that stretch reads MERDEYQLPN…DVYNYYLGNG (318 aa). The residue at position 19 (Ser-19) is a Phosphoserine. Over residues 29 to 39 the composition is skewed to polar residues; sequence VNPSLNSQEMS. Residues 29–88 are disordered; sequence VNPSLNSQEMSNFPLPDIERGSSLLHSTNDSREDVDENDLRVPESDQGTSTEEEDEVDEE. Residues 79 to 88 are compositionally biased toward acidic residues; the sequence is TEEEDEVDEE. Glycyl lysine isopeptide (Lys-Gly) (interchain with G-Cter in ubiquitin) cross-links involve residues Lys-113 and Lys-121. Ser-122 is modified (phosphoserine). Disordered stretches follow at residues 127–159 and 214–234; these read LVEG…DGFD and HHDK…NQKH. A Glycyl lysine isopeptide (Lys-Gly) (interchain with G-Cter in ubiquitin) cross-link involves residue Lys-138. Ser-143 and Ser-144 each carry phosphoserine. Positions 144–159 are enriched in acidic residues; it reads SEEEEDNEFINNDGFD. Polar residues predominate over residues 221-233; sequence ANNGPRNINGNQK. A helical membrane pass occupies residues 319–339; sequence FYCIILEKILNICTLLFVVFV. The Lumenal portion of the chain corresponds to 340–376; sequence STYMGHCVDYSKLPTSHRVSDIIIDKCYSNSITGFTK. Residues 377 to 397 traverse the membrane as a helical segment; sequence FFLWMFYFFVILKIVQLYFDV. At 398-538 the chain is on the cytoplasmic side; that stretch reads QKLSELQNFY…EELQKRFMLA (141 aa). An intramembrane segment occupies 539 to 559; sequence GFLNIILAPFLVTYFVLLYFF. Topologically, residues 560–620 are cytoplasmic; that stretch reads RYFNEYKTSP…DQFPKEKTNL (61 aa). A helical membrane pass occupies residues 621 to 641; the sequence is FLKFVSFICGSFVAILAFLTV. Residues 642 to 656 lie on the Lumenal side of the membrane; it reads FDPENFLNFEITSDR. Phosphoserine is present on Ser-657. Residues 657–677 form a helical membrane-spanning segment; that stretch reads SVIFYITILGAIWSVSRNTIT. Residues 678–723 are Cytoplasmic-facing; sequence QEYHVFDPEETLKELYEYTHYLPKEWEGRYHKEEIKLEFCKLYNLR. Lys-701 participates in a covalent cross-link: Glycyl lysine isopeptide (Lys-Gly) (interchain with G-Cter in ubiquitin). Residues 724–744 lie within the membrane without spanning it; the sequence is IVILLRELTSLMITPFVLWFS. At 745–997 the chain is on the cytoplasmic side; sequence LPSSAGRIVD…EYYKKSDVGR (253 aa). Residues Ser-787 and Ser-792 each carry the phosphoserine modification. Thr-794 is modified (phosphothreonine). Ser-802 carries the phosphoserine modification. Residue Thr-804 is modified to Phosphothreonine. Phosphoserine occurs at positions 831, 842, 864, 948, and 969.

The protein belongs to the ATG9 family. Homotrimer; forms a homotrimer with a central pore that forms a path between the two membrane leaflets. Interacts with ATG23 and ATG27 to form a cycling complex for trafficking to the PAS. Interacts (via N-terminus) with ATG11, required for recruitment of ATG9 to the PAS for the Cvt pathway during nutrient-rich conditions. Interacts (via N-terminus) with ATG17; required for recruitment to the PAS during autophagy and starved conditions. Interacts with ATG2 and ATG18; required for the retrieval of ATG9 from the PAS to the cytoplasmic pool. Interacts with ATG41. Interacts with the conserved oligomeric Golgi (COG) complex subunits COG3 and COG4. Interacts with TRS85. Post-translationally, phosphorylated by ATG1; phosphorylation is required for autophagy and cytoplasm to vacuole transport (Cvt) vesicle formation. Phosphorylation by ATG1 regulates ATG18 interaction and preautophagosome elongation. Phosphorylation at Ser-122 is required for selective autophagy by regulating anterograde trafficking and interaction with ATG23 and ATG27. Phosphorylation at Ser-122 prevents ubiquitination by the SCF(MET30) complex. Ubiquitinated by the SCF(MET30) complex in normal conditions, leading to its degradation by the proteasome, thereby preventing inappropriate induction of autophagy. Ubiquitination by the SCF(MET30) complex is prevented by phosphorylation at Ser-122.

The protein resides in the preautophagosomal structure membrane. The protein localises to the cytoplasmic vesicle membrane. It localises to the golgi apparatus membrane. Its subcellular location is the endoplasmic reticulum membrane. It is found in the mitochondrion membrane. The enzyme catalyses a 1,2-diacyl-sn-glycero-3-phosphocholine(in) = a 1,2-diacyl-sn-glycero-3-phosphocholine(out). The catalysed reaction is a 1,2-diacyl-sn-glycero-3-phospho-L-serine(in) = a 1,2-diacyl-sn-glycero-3-phospho-L-serine(out). It carries out the reaction a 1,2-diacyl-sn-glycero-3-phosphoethanolamine(in) = a 1,2-diacyl-sn-glycero-3-phosphoethanolamine(out). It catalyses the reaction a 1,2-diacyl-sn-glycero-3-phospho-(1D-myo-inositol-3-phosphate)(in) = a 1,2-diacyl-sn-glycero-3-phospho-(1D-myo-inositol-3-phosphate)(out). Its function is as follows. Phospholipid scramblase involved in autophagy and cytoplasm to vacuole transport (Cvt) vesicle formation. Cycles between the preautophagosomal structure/phagophore assembly site (PAS) and the cytoplasmic vesicle pool and supplies membrane for the growing autophagosome. Lipid scramblase activity plays a key role in preautophagosomal structure/phagophore assembly by distributing the phospholipids that arrive through ATG2 from the cytoplasmic to the luminal leaflet of the bilayer, thereby driving autophagosomal membrane expansion. Required for mitophagy. Also involved in endoplasmic reticulum-specific autophagic process and is essential for the survival of cells subjected to severe ER stress. Different machineries are required for anterograde trafficking to the PAS during either the Cvt pathway or bulk autophagy and for retrograde trafficking. Recruits vesicle-tethering proteins TRS85 and YPT1 to the autophagosome formation site. Also recruits ATG23 and ATG8 to the PAS. This is Autophagy-related protein 9 from Saccharomyces cerevisiae (strain YJM789) (Baker's yeast).